A 203-amino-acid chain; its full sequence is Guanylate kinase (203 aa).

Positions 5–183 constitute a Guanylate kinase-like domain; it reads GVLYIISAPS…AVEELKSVVV (179 aa). Position 12–19 (12–19) interacts with ATP; that stretch reads APSGAGKT.

It belongs to the guanylate kinase family.

The protein localises to the cytoplasm. It catalyses the reaction GMP + ATP = GDP + ADP. Its function is as follows. Essential for recycling GMP and indirectly, cGMP. The protein is Guanylate kinase of Geobacter metallireducens (strain ATCC 53774 / DSM 7210 / GS-15).